We begin with the raw amino-acid sequence, 315 residues long: Acetyl-coenzyme A carboxylase carboxyl transferase subunit alpha (315 aa).

Positions 40–293 (LQDKSKTLTE…REELSSQLAM (254 aa)) constitute a CoA carboxyltransferase C-terminal domain.

It belongs to the AccA family. In terms of assembly, acetyl-CoA carboxylase is a heterohexamer composed of biotin carboxyl carrier protein (AccB), biotin carboxylase (AccC) and two subunits each of ACCase subunit alpha (AccA) and ACCase subunit beta (AccD).

It is found in the cytoplasm. The enzyme catalyses N(6)-carboxybiotinyl-L-lysyl-[protein] + acetyl-CoA = N(6)-biotinyl-L-lysyl-[protein] + malonyl-CoA. It participates in lipid metabolism; malonyl-CoA biosynthesis; malonyl-CoA from acetyl-CoA: step 1/1. Functionally, component of the acetyl coenzyme A carboxylase (ACC) complex. First, biotin carboxylase catalyzes the carboxylation of biotin on its carrier protein (BCCP) and then the CO(2) group is transferred by the carboxyltransferase to acetyl-CoA to form malonyl-CoA. This is Acetyl-coenzyme A carboxylase carboxyl transferase subunit alpha from Pseudomonas syringae pv. syringae (strain B728a).